The following is a 544-amino-acid chain: Chaperonin GroEL 1 (544 aa).

ATP-binding positions include 29-32 (TLGP), 86-90 (DGTTT), Gly-413, 482-484 (NVL), and Asp-498.

Belongs to the chaperonin (HSP60) family. As to quaternary structure, forms a cylinder of 14 subunits composed of two heptameric rings stacked back-to-back. Interacts with the co-chaperonin GroES.

It localises to the cytoplasm. The enzyme catalyses ATP + H2O + a folded polypeptide = ADP + phosphate + an unfolded polypeptide.. In terms of biological role, together with its co-chaperonin GroES, plays an essential role in assisting protein folding. The GroEL-GroES system forms a nano-cage that allows encapsulation of the non-native substrate proteins and provides a physical environment optimized to promote and accelerate protein folding. This Chloroflexus aurantiacus (strain ATCC 29366 / DSM 635 / J-10-fl) protein is Chaperonin GroEL 1.